Consider the following 525-residue polypeptide: Cytochrome P450 CYP72A613 (525 aa).

The chain crosses the membrane as a helical span at residues 2–22; sequence VFLFPTGTIIIWVLTILLAVI. C473 lines the heme pocket.

The protein belongs to the cytochrome P450 family. In terms of tissue distribution, mainly expressed in leaves and seed pods and, to a lower extent, in flowers and stems.

It is found in the membrane. It functions in the pathway steroid metabolism; cholesterol metabolism. Functionally, involved in the biosynthesis of spiroketal steroid and saponin natural products from cholesterol such as diosgenin and analogs (e.g. furostanol and spirostanol), plant defense compounds used as main precursors for the industrial production of steroid hormones. During the 5,6-spiroketalization of cholesterol, may catalyze the 27-monohydroxylation of furostanol-type steroid to an intermediate product that undergoes a stereospecific formation of the terminal heterocycle to yield diosgenin. This chain is Cytochrome P450 CYP72A613, found in Trigonella foenum-graecum (Fenugreek).